The primary structure comprises 1453 residues: Spike glycoprotein (1453 aa).

The N-terminal stretch at 1-31 (MIVLTLCLFLVLYNSVICTSNNECVQVNVTQ) is a signal peptide. Residues 32 to 780 (LPGNENIIRD…WTTTPNFYYY (749 aa)) form an S1 region. Over 32–1394 (LPGNENIIRD…NRIETYVKWP (1363 aa)) the chain is Virion surface. The interaction with host ANPEP stretch occupies residues 661 to 805 (VIYEEGDNIV…DSNDVDCEPI (145 aa)). Residues 781–1453 (SIYNYTNERV…YEPIEKVHVH (673 aa)) form an S2 region. A fusion peptide region spans residues 1026-1047 (AGGITLGALGGGAVSIPFAVAV). Residues 1041 to 1160 (IPFAVAVQAR…QVDRLITGRL (120 aa)) form a heptad repeat 1 (HR1) region. Coiled-coil stretches lie at residues 1108-1152 (QDVV…DAQV) and 1342-1384 (TYLN…LEWL). A heptad repeat 2 (HR2) region spans residues 1309 to 1406 (PDYIDINQTV…VWLLIGLVVI (98 aa)). A helical membrane pass occupies residues 1395 to 1414 (WYVWLLIGLVVIFCIPLLLF). Residues 1415–1453 (CCCSTGCCGCFGCIGSCCHSMCSRRQFESYEPIEKVHVH) are Intravirion-facing. A KxHxx motif is present at residues 1449 to 1453 (KVHVH).

The protein belongs to the alphacoronaviruses spike protein family. In terms of assembly, homotrimer. During virus morphogenesis, found in a complex with M and HE proteins. Interacts with host ANPEP.

The protein localises to the virion membrane. The protein resides in the host endoplasmic reticulum-Golgi intermediate compartment membrane. S1 region attaches the virion to the cell membrane by interacting with host ANPEP/aminopeptidase N, initiating the infection. Binding to the receptor probably induces conformational changes in the S glycoprotein unmasking the fusion peptide of S2 region and activating membranes fusion. S2 region belongs to the class I viral fusion protein. Under the current model, the protein has at least 3 conformational states: pre-fusion native state, pre-hairpin intermediate state, and post-fusion hairpin state. During viral and target cell membrane fusion, the coiled coil regions (heptad repeats) regions assume a trimer-of-hairpins structure, positioning the fusion peptide in close proximity to the C-terminal region of the ectodomain. The formation of this structure appears to drive apposition and subsequent fusion of viral and target cell membranes. The polypeptide is Spike glycoprotein (Canis lupus familiaris (Dog)).